The following is a 356-amino-acid chain: Inactive ubiquitin thioesterase OTULINL (356 aa).

The interval 1–22 is disordered; sequence MAATRSPTRARERERSGAPAAG. Residues 1 to 83 are required for membrane binding; that stretch reads MAATRSPTRA…KWWIGYLQRK (83 aa). In terms of domain architecture, OTU spans 128–356; the sequence is KCVRQVRRDN…NDRHYHIPVF (229 aa).

This sequence belongs to the peptidase C65 family. Otulin subfamily. Does not bind ubiquitin or ubiquitin-like proteins.

It is found in the cytoplasm. The protein resides in the endoplasmic reticulum membrane. The protein localises to the nucleus envelope. Its function is as follows. Lacks deubiquitinase activity. This Homo sapiens (Human) protein is Inactive ubiquitin thioesterase OTULINL.